A 370-amino-acid polypeptide reads, in one-letter code: Myomodulin neuropeptides 1 (370 aa).

The signal sequence occupies residues 1–18 (MQVYMLLPLAVFASLTYQ). A propeptide spanning residues 19–50 (GACEETAAAQTSSDASTSSASSEHAENELSRA) is cleaved from the precursor. Residues 28-40 (QTSSDASTSSASS) show a composition bias toward low complexity. The tract at residues 28-52 (QTSSDASTSSASSEHAENELSRAKR) is disordered. Leucine amide occurs at positions 60 and 69. A propeptide spanning residues 73 to 190 (GGPVEPESEE…EPEEGGLGEE (118 aa)) is cleaved from the precursor. Leu-199 and Leu-209 each carry leucine amide. The span at 210-226 (GKREGEEGDEMDKKQDE) shows a compositional bias: basic and acidic residues. Positions 210–230 (GKREGEEGDEMDKKQDESLND) are disordered. A propeptide spanning residues 213–237 (EGEEGDEMDKKQDESLNDDFENDDI) is cleaved from the precursor. 11 positions are modified to leucine amide: Leu-246, Leu-256, Leu-266, Leu-276, Leu-286, Leu-296, Leu-306, Leu-316, Leu-326, Leu-336, and Leu-346. The segment at 344 to 370 (LRLGKRDDDEKEKKSLNMSRLGKRSTQ) is disordered. Basic and acidic residues predominate over residues 347 to 358 (GKRDDDEKEKKS). Residues 350–355 (DDDEKE) constitute a propeptide that is removed on maturation. Leu-364 carries the leucine amide modification. Residues 368 to 370 (STQ) constitute a propeptide that is removed on maturation.

Expressed in all ganglia of the CNS, but only in a subset of neurons including L10 in the abdominal ganglion and B16 in the buccal ganglion.

The protein resides in the secreted. Functionally, exogenous application of myomodulins potentiates ARC muscle contraction. This chain is Myomodulin neuropeptides 1 (MYOMOD1), found in Aplysia californica (California sea hare).